The sequence spans 971 residues: Exportin-2 (971 aa).

At Met1 the chain carries N-acetylmethionine. The region spanning Ala29–Ser102 is the Importin N-terminal domain. Ser112 is subject to Phosphoserine. N6-acetyllysine is present on residues Lys574 and Lys824. Residue Ser931 is modified to Phosphoserine.

Belongs to the XPO2/CSE1 family. Found in a complex with CSE1L/XPO2, Ran and KPNA2. Binds with high affinity to importin-alpha only in the presence of RanGTP. The complex is dissociated by the combined action of RanBP1 and RanGAP1. Interacts with CFTR.

It localises to the cytoplasm. The protein localises to the nucleus. In terms of biological role, export receptor for importin-alpha. Mediates importin-alpha re-export from the nucleus to the cytoplasm after import substrates (cargos) have been released into the nucleoplasm. In the nucleus binds cooperatively to importin-alpha and to the GTPase Ran in its active GTP-bound form. Docking of this trimeric complex to the nuclear pore complex (NPC) is mediated through binding to nucleoporins. Upon transit of a nuclear export complex into the cytoplasm, disassembling of the complex and hydrolysis of Ran-GTP to Ran-GDP (induced by RANBP1 and RANGAP1, respectively) cause release of the importin-alpha from the export receptor. CSE1L/XPO2 then return to the nuclear compartment and mediate another round of transport. The directionality of nuclear export is thought to be conferred by an asymmetric distribution of the GTP- and GDP-bound forms of Ran between the cytoplasm and nucleus. The chain is Exportin-2 (CSE1L) from Bos taurus (Bovine).